The chain runs to 32 residues: Basic phospholipase A2 (32 aa).

Ca(2+) contacts are provided by Tyr-26, Gly-28, and Gly-30.

The protein belongs to the phospholipase A2 family. Group II subfamily. It depends on Ca(2+) as a cofactor. Expressed by the venom gland.

The protein resides in the secreted. The enzyme catalyses a 1,2-diacyl-sn-glycero-3-phosphocholine + H2O = a 1-acyl-sn-glycero-3-phosphocholine + a fatty acid + H(+). In terms of biological role, snake venom phospholipase A2 (PLA2) that inhibits neuromuscular transmission by blocking acetylcholine release from the nerve termini. PLA2 catalyzes the calcium-dependent hydrolysis of the 2-acyl groups in 3-sn-phosphoglycerides. The polypeptide is Basic phospholipase A2 (Gloydius halys (Chinese water mocassin)).